A 179-amino-acid polypeptide reads, in one-letter code: Signal peptidase complex catalytic subunit sec11 (179 aa).

Topologically, residues methionine 1 to glutamine 22 are cytoplasmic. A helical; Signal-anchor for type II membrane protein membrane pass occupies residues isoleucine 23 to phenylalanine 43. The Lumenal portion of the chain corresponds to serine 44–glutamate 179. Residues serine 57, histidine 96, and aspartate 122 each act as charge relay system in the active site. The tract at residues phenylalanine 165–serine 176 is C-terminal short (CTS) helix.

This sequence belongs to the peptidase S26B family. Component of the signal peptidase complex (SPC) composed of a catalytic subunit sec11 and three accessory subunits spcs1, spcs2 and spcs3. The complex induces a local thinning of the ER membrane which is used to measure the length of the signal peptide (SP) h-region of protein substrates. This ensures the selectivity of the complex towards h-regions shorter than 18-20 amino acids.

It localises to the endoplasmic reticulum membrane. The enzyme catalyses Cleavage of hydrophobic, N-terminal signal or leader sequences from secreted and periplasmic proteins.. In terms of biological role, catalytic component of the signal peptidase complex (SPC) which catalyzes the cleavage of N-terminal signal sequences from nascent proteins as they are translocated into the lumen of the endoplasmic reticulum. Specifically cleaves N-terminal signal peptides that contain a hydrophobic alpha-helix (h-region) shorter than 18-20 amino acids. The sequence is that of Signal peptidase complex catalytic subunit sec11 (sec11) from Dictyostelium discoideum (Social amoeba).